The sequence spans 1567 residues: ABC multidrug transporter MDR1 (1567 aa).

Pro residues predominate over residues 1-11; the sequence is MASQPPQPPSG. Residues 1 to 37 form a disordered region; the sequence is MASQPPQPPSGQPDTQYEEYQSEVITETTNRPTPAAD. Polar residues predominate over residues 22–32; the sequence is SEVITETTNRP. 3 N-linked (GlcNAc...) asparagine glycosylation sites follow: N149, N157, and N356. One can recognise an ABC transporter 1 domain in the interval 167-432; the sequence is VQYQDTFLSP…FEEMGWYCPP (266 aa). 6 consecutive transmembrane segments (helical) span residues 543-563, 571-591, 636-656, 661-681, 691-711, and 798-818; these read STIA…SLFF, GFFA…LMSI, IPIK…LGGL, AKFF…SAIF, IPQA…YTGF, and LGIL…VSEL. N-linked (GlcNAc...) asparagine glycans are attached at residues N819, N895, and N912. An ABC transporter 2 domain is found at 891 to 1134; sequence FTWRNVTYDI…LLNYFETHGA (244 aa). 927–934 contacts ATP; it reads GVSGAGKT. The interval 1172 to 1202 is disordered; sequence ESRHVQQELDRIQSETSKRNEGHGQSAEKEP. Residues 1231 to 1251 traverse the membrane as a helical segment; the sequence is IWGKLLLGLTSALFIGFSFFL. N1253 carries an N-linked (GlcNAc...) asparagine glycan. 5 helical membrane passes run 1257–1277, 1305–1325, 1345–1365, 1372–1392, and 1498–1518; these read AGLQ…SSLV, VFLL…GIIA, ILLL…QMII, ETAG…NGVL, and GIGW…YYLI.

It belongs to the ABC transporter superfamily. ABCG family. PDR (TC 3.A.1.205) subfamily.

Its subcellular location is the cell membrane. The enzyme catalyses voriconazole(in) + ATP + H2O = voriconazole(out) + ADP + phosphate + H(+). The catalysed reaction is fluconazole(in) + ATP + H2O = fluconazole(out) + ADP + phosphate + H(+). It catalyses the reaction (R)-miconazole(in) + ATP + H2O = (R)-miconazole(out) + ADP + phosphate + H(+). It carries out the reaction (S)-miconazole(in) + ATP + H2O = (S)-miconazole(out) + ADP + phosphate + H(+). Pleiotropic ABC efflux transporter that may be involved in the modulation susceptibility to a wide range of unrelated cytotoxic compounds. In Trichophyton equinum (strain ATCC MYA-4606 / CBS 127.97) (Horse ringworm fungus), this protein is ABC multidrug transporter MDR1.